The primary structure comprises 215 residues: Cytochrome c biogenesis ATP-binding export protein CcmA (215 aa).

Positions 3–211 constitute an ABC transporter domain; the sequence is LTAENLAARR…KMTGFAGVDR (209 aa). 35–42 contributes to the ATP binding site; that stretch reads GRNGSGKS.

The protein belongs to the ABC transporter superfamily. CcmA exporter (TC 3.A.1.107) family. The complex is composed of two ATP-binding proteins (CcmA) and two transmembrane proteins (CcmB).

It is found in the cell inner membrane. The catalysed reaction is heme b(in) + ATP + H2O = heme b(out) + ADP + phosphate + H(+). Functionally, part of the ABC transporter complex CcmAB involved in the biogenesis of c-type cytochromes; once thought to export heme, this seems not to be the case, but its exact role is uncertain. Responsible for energy coupling to the transport system. In Rhizobium etli (strain ATCC 51251 / DSM 11541 / JCM 21823 / NBRC 15573 / CFN 42), this protein is Cytochrome c biogenesis ATP-binding export protein CcmA.